Here is a 459-residue protein sequence, read N- to C-terminus: Uterine milk protein (459 aa).

Positions 1 to 25 (MSHGRMNLALSLVFILCGLFNSIFC) are cleaved as a signal peptide. N-linked (GlcNAc...) asparagine glycosylation occurs at asparagine 268.

Belongs to the serpin family. UTMP subfamily.

This chain is Uterine milk protein, found in Bos taurus (Bovine).